Consider the following 48-residue polypeptide: uncharacterized protein (48 aa).

This is an uncharacterized protein from Acidianus filamentous virus 2 (isolate Italy/Pozzuoli) (AFV-2).